Reading from the N-terminus, the 96-residue chain is UPF0235 protein VP2619 (96 aa).

The protein belongs to the UPF0235 family.

This is UPF0235 protein VP2619 from Vibrio parahaemolyticus serotype O3:K6 (strain RIMD 2210633).